The primary structure comprises 160 residues: Ribosomal RNA large subunit methyltransferase H (160 aa).

Residues Gly108 and 127 to 132 contribute to the S-adenosyl-L-methionine site; that span reads FGKMTW.

It belongs to the RNA methyltransferase RlmH family. As to quaternary structure, homodimer.

Its subcellular location is the cytoplasm. It carries out the reaction pseudouridine(1915) in 23S rRNA + S-adenosyl-L-methionine = N(3)-methylpseudouridine(1915) in 23S rRNA + S-adenosyl-L-homocysteine + H(+). Functionally, specifically methylates the pseudouridine at position 1915 (m3Psi1915) in 23S rRNA. The sequence is that of Ribosomal RNA large subunit methyltransferase H from Beijerinckia indica subsp. indica (strain ATCC 9039 / DSM 1715 / NCIMB 8712).